The sequence spans 191 residues: UPF0398 protein LSEI_1479 (191 aa).

Belongs to the UPF0398 family.

In Lacticaseibacillus paracasei (strain ATCC 334 / BCRC 17002 / CCUG 31169 / CIP 107868 / KCTC 3260 / NRRL B-441) (Lactobacillus paracasei), this protein is UPF0398 protein LSEI_1479.